Reading from the N-terminus, the 192-residue chain is Large ribosomal subunit protein bL9 (192 aa).

The tract at residues 173-192 is disordered; it reads ALRPEDFFDPEADGLDENEA. Positions 179-192 are enriched in acidic residues; the sequence is FFDPEADGLDENEA.

Belongs to the bacterial ribosomal protein bL9 family.

Binds to the 23S rRNA. The chain is Large ribosomal subunit protein bL9 from Rhizobium etli (strain ATCC 51251 / DSM 11541 / JCM 21823 / NBRC 15573 / CFN 42).